The sequence spans 565 residues: Augmin complex subunit dgt3 (565 aa).

2 coiled-coil regions span residues 135–171 (ELQL…AKKA) and 212–241 (QDYD…IQFY).

The protein belongs to the HAUS3 family. In terms of assembly, component of the augmin complex composed of dgt2, dgt3, dgt4, dgt5, dgt6, msd1, msd5 and wac. The complex interacts directly or indirectly with microtubules and is required for centrosome-independent generation of spindle microtubules.

Its subcellular location is the cytoplasm. The protein localises to the cytoskeleton. It localises to the spindle. As part of the augmin complex, plays a role in centrosome-independent generation of spindle microtubules. The complex is required for mitotic spindle assembly through its involvement in localizing gamma-tubulin to spindle microtubules. The protein is Augmin complex subunit dgt3 of Drosophila melanogaster (Fruit fly).